A 273-amino-acid polypeptide reads, in one-letter code: Multivesicular body subunit 12A (273 aa).

In terms of domain architecture, MABP spans 9-151 (GMPLAGLAWS…GFAIWCRKAK (143 aa)). Thr-130 carries the phosphothreonine modification. Positions 154-186 (RPVPKPRALSRDVRDLSLDSPGQPSKGGFPERT) are disordered. Positions 155–160 (PVPKPR) match the SH3-binding motif. Residues Ser-163, Ser-170, Ser-195, and Ser-202 each carry the phosphoserine modification. The interaction with TSG101, VPS37B and VPS28 stretch occupies residues 192 to 273 (SRASTLRRND…AAARLPPSVS (82 aa)). Tyr-204 is subject to Phosphotyrosine. Phosphoserine is present on Ser-207. Positions 215 to 265 (MDGVPFTLHPRFEGKSCGPLAFSAFADLTIKSLADIEAEYNYGFVVEKTAA) constitute a UMA domain.

Belongs to the MVB12 family. Component of the ESCRT-I complex (endosomal sorting complex required for transport I) which consists of TSG101, VPS28, a VPS37 protein (VPS37A to -D) and MVB12A or MVB12B in a 1:1:1:1 stoichiometry. Interacts with CD2AP and CIN85/SH3KBP1. Interacts with CD2AP (via one of the SH3 domains). Interacts with TSG101; the association appears to be mediated by the TSG101-VPS37 binary subcomplex. Interacts with VPS28. Interacts with VPS37B; the association appears to be mediated by the TSG101-VPS37 binary subcomplex. Interacts with VPS37C; the association appears to be mediated by the TSG101-VPS37 binary subcomplex. Interacts with VPS37D; the association appears to be mediated by the TSG101-VPS37 binary subcomplex. Interacts with CEP55. Post-translationally, phosphorylated on Tyr-204 upon EGF stimulation. Phosphorylation is required for interaction with CD2AP and CIN85/SH3KBP1.

It is found in the cytoplasm. The protein localises to the cytoskeleton. The protein resides in the nucleus. It localises to the endosome. Its subcellular location is the microtubule organizing center. It is found in the centrosome. The protein localises to the late endosome membrane. Component of the ESCRT-I complex, a regulator of vesicular trafficking process. Required for the sorting of endocytic ubiquitinated cargos into multivesicular bodies. May be involved in the ligand-mediated internalization and down-regulation of EGF receptor. In Bos taurus (Bovine), this protein is Multivesicular body subunit 12A (MVB12A).